The sequence spans 77 residues: Small ribosomal subunit protein bS18 (77 aa).

It belongs to the bacterial ribosomal protein bS18 family. In terms of assembly, part of the 30S ribosomal subunit. Forms a tight heterodimer with protein bS6.

Its function is as follows. Binds as a heterodimer with protein bS6 to the central domain of the 16S rRNA, where it helps stabilize the platform of the 30S subunit. This chain is Small ribosomal subunit protein bS18, found in Lactobacillus helveticus (strain DPC 4571).